The sequence spans 101 residues: Small ribosomal subunit protein bS6 (101 aa).

The protein belongs to the bacterial ribosomal protein bS6 family. Part of the 30S ribosomal subunit. Forms a tight heterodimer with protein bS18.

Its function is as follows. Located on the outer edge of the platform on the body of the 30S subunit. The chain is Small ribosomal subunit protein bS6 (rpsF) from Thermus thermophilus (strain ATCC BAA-163 / DSM 7039 / HB27).